The sequence spans 101 residues: Small ribosomal subunit protein uS14m (101 aa).

This sequence belongs to the universal ribosomal protein uS14 family. In terms of assembly, component of the mitochondrial ribosome small subunit (28S) which comprises a 12S rRNA and about 30 distinct proteins. Interacts with LIAT1.

The protein resides in the mitochondrion. This is Small ribosomal subunit protein uS14m (mrps14) from Dictyostelium citrinum (Slime mold).